Consider the following 682-residue polypeptide: Potassium-transporting ATPase ATP-binding subunit (682 aa).

Helical transmembrane passes span 35–55, 62–82, 219–239, and 254–274; these read VMFIVWVGSLLTTLLAIAMAG, ATFTAAVSIWLWFTVLFANFA, IALTILLIALTLVFLLATATI, and VLVALLVCLIPTTIGGLLSAI. The active-site 4-aspartylphosphate intermediate is the aspartate 307. ATP contacts are provided by residues aspartate 344, glutamate 348, 377-384, and lysine 395; that span reads FTAQTRMS. Mg(2+) is bound by residues aspartate 518 and aspartate 522. The next 3 helical transmembrane spans lie at 588–608, 616–636, and 656–676; these read FAIIPAAFAAVYPQLAMLNVM, AILSAVIFNALIIVFLIPLAL, and IYGLGGLLVPFIGIKAIDLLL.

Belongs to the cation transport ATPase (P-type) (TC 3.A.3) family. Type IA subfamily. As to quaternary structure, the system is composed of three essential subunits: KdpA, KdpB and KdpC.

It is found in the cell inner membrane. The catalysed reaction is K(+)(out) + ATP + H2O = K(+)(in) + ADP + phosphate + H(+). Part of the high-affinity ATP-driven potassium transport (or Kdp) system, which catalyzes the hydrolysis of ATP coupled with the electrogenic transport of potassium into the cytoplasm. This subunit is responsible for energy coupling to the transport system and for the release of the potassium ions to the cytoplasm. This is Potassium-transporting ATPase ATP-binding subunit from Klebsiella pneumoniae (strain 342).